A 601-amino-acid chain; its full sequence is Elongation factor 4 (601 aa).

The tr-type G domain occupies 5 to 188; the sequence is SHIRNFAIIA…ALVLRLPPPT (184 aa). GTP is bound by residues 17 to 22 and 135 to 138; these read DHGKST and NKID.

It belongs to the TRAFAC class translation factor GTPase superfamily. Classic translation factor GTPase family. LepA subfamily.

It is found in the cell inner membrane. It carries out the reaction GTP + H2O = GDP + phosphate + H(+). Its function is as follows. Required for accurate and efficient protein synthesis under certain stress conditions. May act as a fidelity factor of the translation reaction, by catalyzing a one-codon backward translocation of tRNAs on improperly translocated ribosomes. Back-translocation proceeds from a post-translocation (POST) complex to a pre-translocation (PRE) complex, thus giving elongation factor G a second chance to translocate the tRNAs correctly. Binds to ribosomes in a GTP-dependent manner. The protein is Elongation factor 4 of Rhodospirillum rubrum (strain ATCC 11170 / ATH 1.1.1 / DSM 467 / LMG 4362 / NCIMB 8255 / S1).